Here is a 162-residue protein sequence, read N- to C-terminus: Caveolin-2 (162 aa).

Residues 1 to 86 (MGLETEKADV…FEISKYVMYK (86 aa)) lie on the Cytoplasmic side of the membrane. Tyr19 bears the Phosphotyrosine; by SRC mark. A phosphoserine mark is found at Ser20 and Ser23. Position 27 is a phosphotyrosine (Tyr27). Ser36 is modified (phosphoserine). An intramembrane region (helical) is located at residues 87–107 (FLTVFLAIPLAFIAGILFATL). Over 108-162 (SCLHIWILMPFVKTCLMVLPSVQTIWKSVTDVVIGPLCTSVGRSFSSVSMQLSHD) the chain is Cytoplasmic.

Belongs to the caveolin family. Monomer or homodimer. Interacts with CAV1; the interaction forms a stable heterooligomeric complex that is required for targeting to lipid rafts and for caveolae formation. Tyrosine phosphorylated forms do not form heterooligomers with the Tyr-19-phosphorylated form existing as a monomer or dimer, and the Tyr-27-form as a monomer only. Interacts (tyrosine phosphorylated form) with the SH2 domain-containing proteins, RASA1, NCK1 and SRC. Interacts (tyrosine phosphorylated form) with INSR, the interaction (Tyr-27-phosphorylated form) is increased on insulin stimulation. Interacts (Tyr-19 phosphorylated form) with MAPK1 (phosphorylated form); the interaction, promoted by insulin, leads to nuclear location and MAPK1 activation. Interacts with STAT3; the interaction is increased on insulin-induced tyrosine phosphorylation leading to STAT activation. In terms of processing, phosphorylated on serine and tyrosine residues. CAV1 promotes phosphorylation on Ser-23 which then targets the complex to the plasma membrane, lipid rafts and caveolae. Phosphorylation on Ser-36 appears to modulate mitosis in endothelial cells. Phosphorylation on both Tyr-19 and Tyr-27 is required for insulin-induced 'Ser-727' phosphorylation of STAT3 and its activation. Phosphorylation on Tyr-19 is required for insulin-induced phosphorylation of MAPK1 and DNA binding of STAT3. Tyrosine phosphorylation is induced by both EGF and insulin.

The protein localises to the nucleus. It localises to the cytoplasm. Its subcellular location is the golgi apparatus membrane. The protein resides in the cell membrane. It is found in the membrane. The protein localises to the caveola. In terms of biological role, may act as a scaffolding protein within caveolar membranes. Interacts directly with G-protein alpha subunits and can functionally regulate their activity. Acts as an accessory protein in conjunction with CAV1 in targeting to lipid rafts and driving caveolae formation. The Ser-36 phosphorylated form has a role in modulating mitosis in endothelial cells. Positive regulator of cellular mitogenesis of the MAPK signaling pathway. Required for the insulin-stimulated nuclear translocation and activation of MAPK1 and STAT3, and the subsequent regulation of cell cycle progression. The chain is Caveolin-2 (Cav2) from Mus musculus (Mouse).